The sequence spans 233 residues: Ribose-5-phosphate isomerase A (233 aa).

Substrate is bound by residues 31 to 34 (SGST), 87 to 90 (DGAD), and 100 to 103 (KGGG). Catalysis depends on glutamate 109, which acts as the Proton acceptor. A substrate-binding site is contributed by lysine 127.

It belongs to the ribose 5-phosphate isomerase family. In terms of assembly, homodimer.

The catalysed reaction is aldehydo-D-ribose 5-phosphate = D-ribulose 5-phosphate. It functions in the pathway carbohydrate degradation; pentose phosphate pathway; D-ribose 5-phosphate from D-ribulose 5-phosphate (non-oxidative stage): step 1/1. Its function is as follows. Catalyzes the reversible conversion of ribose-5-phosphate to ribulose 5-phosphate. The polypeptide is Ribose-5-phosphate isomerase A (Chlamydia felis (strain Fe/C-56) (Chlamydophila felis)).